The following is a 499-amino-acid chain: MAKVDLMEYERALELFEPVLGFEVHVELNTKTKMFCGCANEFGSGANTNTCPTCLGLPGGLPHVNEKAIESSIRLGLALGCDIAESSRFARKNYFYPDLAKNFQTSQYDEPIAHDGRVSIELENGRELTIEIERAHMEEDAGKLTHIGGATGRIQGADHSLVDFNRGGVPLVEIVTKMIEGAETDAPEVGRTYVRAIRDIVKALGVSNARMEEGNVRCDANVSLRRRGSSELGTRTETKNVNSLRSIERAVRYEIQRQAAILEAGGAIVQETRHWHEDTGSTSAGRPKSDADDYRYFPEPDLVPVAPSREWIEELRGTLPEPPAARRKRLTAEWGFTALEFQDVANADLLDELEATIAAGAAPAAARKWWTGEIARVANAQGVAAGTLVAPEHVAELAGLVEAGTLTDRLARQVLEGVIAGEGRPQEVVDARGLAVVSDDGALVAAIDEALAAQPDVLAKIRDGKVQAAGAVIGAVMKAMKGQADAARVRELVLERASQ.

It belongs to the GatB/GatE family. GatB subfamily. Heterotrimer of A, B and C subunits.

It catalyses the reaction L-glutamyl-tRNA(Gln) + L-glutamine + ATP + H2O = L-glutaminyl-tRNA(Gln) + L-glutamate + ADP + phosphate + H(+). It carries out the reaction L-aspartyl-tRNA(Asn) + L-glutamine + ATP + H2O = L-asparaginyl-tRNA(Asn) + L-glutamate + ADP + phosphate + 2 H(+). Functionally, allows the formation of correctly charged Asn-tRNA(Asn) or Gln-tRNA(Gln) through the transamidation of misacylated Asp-tRNA(Asn) or Glu-tRNA(Gln) in organisms which lack either or both of asparaginyl-tRNA or glutaminyl-tRNA synthetases. The reaction takes place in the presence of glutamine and ATP through an activated phospho-Asp-tRNA(Asn) or phospho-Glu-tRNA(Gln). The sequence is that of Aspartyl/glutamyl-tRNA(Asn/Gln) amidotransferase subunit B from Leifsonia xyli subsp. xyli (strain CTCB07).